We begin with the raw amino-acid sequence, 405 residues long: Histone deacetylase clr6 (405 aa).

Residues Lys-6–Gly-318 are histone deacetylase. Residue His-138 is part of the active site.

Belongs to the histone deacetylase family. HD type 1 subfamily. As to quaternary structure, heterotetramer of alp13, clr6, prw1 and pst2.

The protein resides in the nucleus. It catalyses the reaction N(6)-acetyl-L-lysyl-[histone] + H2O = L-lysyl-[histone] + acetate. Its function is as follows. Responsible for the deacetylation of lysine residues on the N-terminal part of the core histones (H2A, H2B, H3 and H4). Histone deacetylation gives a tag for epigenetic repression and plays an important role in transcriptional regulation, cell cycle progression and developmental events. Histone deacetylases act via the formation of large multiprotein complexes. Has a role in chromatin assembly and chromosome segregation. This Schizosaccharomyces pombe (strain 972 / ATCC 24843) (Fission yeast) protein is Histone deacetylase clr6 (clr6).